The primary structure comprises 141 residues: Large ribosomal subunit protein uL11 (141 aa).

This sequence belongs to the universal ribosomal protein uL11 family. As to quaternary structure, part of the ribosomal stalk of the 50S ribosomal subunit. Interacts with L10 and the large rRNA to form the base of the stalk. L10 forms an elongated spine to which L12 dimers bind in a sequential fashion forming a multimeric L10(L12)X complex. Post-translationally, one or more lysine residues are methylated.

Functionally, forms part of the ribosomal stalk which helps the ribosome interact with GTP-bound translation factors. This is Large ribosomal subunit protein uL11 from Chlamydia caviae (strain ATCC VR-813 / DSM 19441 / 03DC25 / GPIC) (Chlamydophila caviae).